Reading from the N-terminus, the 130-residue chain is Small ribosomal subunit protein uS11 (130 aa).

It belongs to the universal ribosomal protein uS11 family. As to quaternary structure, part of the 30S ribosomal subunit. Interacts with proteins S7 and S18. Binds to IF-3.

Its function is as follows. Located on the platform of the 30S subunit, it bridges several disparate RNA helices of the 16S rRNA. Forms part of the Shine-Dalgarno cleft in the 70S ribosome. In Shewanella denitrificans (strain OS217 / ATCC BAA-1090 / DSM 15013), this protein is Small ribosomal subunit protein uS11.